A 339-amino-acid polypeptide reads, in one-letter code: Heat-inducible transcription repressor HrcA (339 aa).

Belongs to the HrcA family.

Its function is as follows. Negative regulator of class I heat shock genes (grpE-dnaK-dnaJ and groELS operons). Prevents heat-shock induction of these operons. The protein is Heat-inducible transcription repressor HrcA of Paraburkholderia phymatum (strain DSM 17167 / CIP 108236 / LMG 21445 / STM815) (Burkholderia phymatum).